A 94-amino-acid chain; its full sequence is Integration host factor subunit beta (94 aa).

This sequence belongs to the bacterial histone-like protein family. In terms of assembly, heterodimer of an alpha and a beta chain.

Functionally, this protein is one of the two subunits of integration host factor, a specific DNA-binding protein that functions in genetic recombination as well as in transcriptional and translational control. The sequence is that of Integration host factor subunit beta from Yersinia enterocolitica serotype O:8 / biotype 1B (strain NCTC 13174 / 8081).